A 23-amino-acid polypeptide reads, in one-letter code: NADP-dependent malic enzyme (23 aa).

Belongs to the malic enzymes family. As to quaternary structure, homotetramer.

It carries out the reaction (S)-malate + NADP(+) = pyruvate + CO2 + NADPH. It catalyses the reaction oxaloacetate + H(+) = pyruvate + CO2. This Populus euphratica (Euphrates poplar) protein is NADP-dependent malic enzyme.